We begin with the raw amino-acid sequence, 370 residues long: Membrane cofactor protein (370 aa).

The signal sequence occupies residues Met-1–Ser-32. 4 Sushi domains span residues Asp-33 to Arg-96, Lys-97 to Lys-159, Ile-160 to Val-225, and Val-226 to Lys-285. The Extracellular segment spans residues Asp-33–Glu-315. Cystine bridges form between Cys-35–Cys-80, Cys-64–Cys-94, Cys-99–Cys-141, Cys-127–Cys-157, Cys-162–Cys-210, Cys-191–Cys-223, Cys-228–Cys-270, and Cys-256–Cys-283. Asn-114 is a glycosylation site (N-linked (GlcNAc...) asparagine). The O-linked (GalNAc...) serine glycan is linked to Ser-287. A glycan (O-linked (GalNAc...) threonine) is linked at Thr-288. Ser-289 carries O-linked (GalNAc...) serine glycosylation. Thr-292 is a glycosylation site (O-linked (GalNAc...) threonine). Ser-294 is a glycosylation site (O-linked (GalNAc...) serine). O-linked (GalNAc...) threonine glycosylation is present at Thr-296. Residues Trp-316–Leu-336 traverse the membrane as a helical segment. Residues His-337 to Ser-370 lie on the Cytoplasmic side of the membrane.

As to quaternary structure, interacts with C3b. Interacts with C4b. Interacts with moesin/MSN. In terms of processing, O-glycosylated.

It localises to the cytoplasmic vesicle. Its subcellular location is the secretory vesicle. The protein resides in the acrosome inner membrane. Acts as a cofactor for complement factor I, a serine protease which protects autologous cells against complement-mediated injury by cleaving C3b and C4b deposited on host tissue. May be involved in the fusion of the spermatozoa with the oocyte during fertilization. Also acts as a costimulatory factor for T-cells which induces the differentiation of CD4+ into T-regulatory 1 cells. T-regulatory 1 cells suppress immune responses by secreting interleukin-10, and therefore are thought to prevent autoimmunity. The protein is Membrane cofactor protein (CD46) of Saguinus oedipus (Cotton-top tamarin).